A 403-amino-acid polypeptide reads, in one-letter code: S-arrestin (403 aa).

Residues 11-19 (HVIFKKVSR) form an interaction with RHO region. At T231 the chain carries Phosphothreonine. The interval 381–403 (RQNLKDTGENTEGKKDEDAGQDE) is disordered.

It belongs to the arrestin family. As to quaternary structure, monomer. Homodimer. Homotetramer. Interacts with RHO (via the phosphorylated C-terminus). As to expression, detected in retina (at protein level).

It is found in the cell projection. It localises to the cilium. The protein localises to the photoreceptor outer segment. Its subcellular location is the membrane. Functionally, binds to photoactivated, phosphorylated RHO and terminates RHO signaling via G-proteins by competing with G-proteins for the same binding site on RHO. May play a role in preventing light-dependent degeneration of retinal photoreceptor cells. The sequence is that of S-arrestin (Sag) from Mus musculus (Mouse).